The following is a 204-amino-acid chain: dITP/XTP pyrophosphatase (204 aa).

8 to 13 is a substrate binding site; it reads SNNAKK. Residues Glu-43 and Asp-72 each coordinate Mg(2+). Residue Asp-72 is the Proton acceptor of the active site. Residues Ser-73, 155–158, Lys-180, and 185–186 each bind substrate; these read FGYD and HR.

It belongs to the HAM1 NTPase family. Homodimer. It depends on Mg(2+) as a cofactor.

The enzyme catalyses XTP + H2O = XMP + diphosphate + H(+). The catalysed reaction is dITP + H2O = dIMP + diphosphate + H(+). It carries out the reaction ITP + H2O = IMP + diphosphate + H(+). Pyrophosphatase that catalyzes the hydrolysis of nucleoside triphosphates to their monophosphate derivatives, with a high preference for the non-canonical purine nucleotides XTP (xanthosine triphosphate), dITP (deoxyinosine triphosphate) and ITP. Seems to function as a house-cleaning enzyme that removes non-canonical purine nucleotides from the nucleotide pool, thus preventing their incorporation into DNA/RNA and avoiding chromosomal lesions. This Cutibacterium acnes (strain DSM 16379 / KPA171202) (Propionibacterium acnes) protein is dITP/XTP pyrophosphatase.